We begin with the raw amino-acid sequence, 313 residues long: Tyrosine recombinase XerD (313 aa).

One can recognise a Core-binding (CB) domain in the interval 17–102; the sequence is EDNDVIIEQF…TLRRFFQYLY (86 aa). Positions 123–307 constitute a Tyr recombinase domain; sequence RLPKDLSEQQ…ATERLKVLHQ (185 aa). Active-site residues include Arg-163, Lys-187, His-259, Arg-262, and His-285. Catalysis depends on Tyr-294, which acts as the O-(3'-phospho-DNA)-tyrosine intermediate.

This sequence belongs to the 'phage' integrase family. XerD subfamily. As to quaternary structure, forms a cyclic heterotetrameric complex composed of two molecules of XerC and two molecules of XerD, in which XerC interacts with XerD via its C-terminal region, XerD interacts with XerC via its C-terminal region and so on.

It localises to the cytoplasm. With respect to regulation, ftsK may regulate the catalytic switch between XerC and XerD in the heterotetrameric complex during the two steps of the recombination process. Site-specific tyrosine recombinase, which acts by catalyzing the cutting and rejoining of the recombining DNA molecules. Binds cooperatively to specific DNA consensus sequences that are separated from XerC binding sites by a short central region, forming the heterotetrameric XerC-XerD complex that recombines DNA substrates. The complex is essential to convert dimers of the bacterial chromosome into monomers to permit their segregation at cell division. It also contributes to the segregational stability of plasmids. In the complex XerD specifically exchanges the bottom DNA strands. The protein is Tyrosine recombinase XerD of Proteus mirabilis.